The sequence spans 220 residues: Superoxide dismutase [Fe] (220 aa).

Fe cation is bound by residues histidine 26, histidine 73, aspartate 164, and histidine 168.

This sequence belongs to the iron/manganese superoxide dismutase family. As to quaternary structure, homodimer. Fe cation serves as cofactor.

It carries out the reaction 2 superoxide + 2 H(+) = H2O2 + O2. Destroys superoxide anion radicals which are normally produced within the cells and which are toxic to biological systems. The protein is Superoxide dismutase [Fe] (sodB) of Campylobacter coli.